Consider the following 137-residue polypeptide: Acidic phospholipase A2 PL-I (137 aa).

Residues 1-17 (AVCVSLLGASSIRPLPL) form the signal peptide. Disulfide bonds link Cys-28–Cys-89, Cys-44–Cys-136, Cys-46–Cys-62, Cys-61–Cys-117, Cys-68–Cys-110, Cys-78–Cys-103, and Cys-96–Cys-108. Residues Tyr-45, Gly-47, and Gly-49 each contribute to the Ca(2+) site. His-65 is a catalytic residue. Asp-66 provides a ligand contact to Ca(2+). The active site involves Asp-111.

The cofactor is Ca(2+). In terms of tissue distribution, expressed by the venom gland.

The protein localises to the secreted. It catalyses the reaction a 1,2-diacyl-sn-glycero-3-phosphocholine + H2O = a 1-acyl-sn-glycero-3-phosphocholine + a fatty acid + H(+). In terms of biological role, snake venom phospholipase A2 (PLA2) that may act in the hemostasis system of the prey. Exhibits hydrolytic activities, and prefers the anionic micelles (dPPC with deoxycholate) (793 umol/mg/min) to the zwitterionic micelles (dPPC with Triton X-100) (591 umol/mg/min). PLA2 catalyzes the calcium-dependent hydrolysis of the 2-acyl groups in 3-sn-phosphoglycerides. The sequence is that of Acidic phospholipase A2 PL-I from Walterinnesia aegyptia (Desert black snake).